Here is a 226-residue protein sequence, read N- to C-terminus: Choline transport system permease protein OpuBD (226 aa).

The 181-residue stretch at 22–202 (FGRHFLMSAY…VMAVGADLLM (181 aa)) folds into the ABC transmembrane type-1 domain. 5 helical membrane-spanning segments follow: residues 27 to 47 (LMSAYGVLFAAVVGVPAGILI), 52 to 72 (RLSAWVFAVTNVIQTIPALAM), 73 to 93 (LAVLMLVMGLGANTVILSLFL), 148 to 168 (ALVIAIGITAIGTFVGAGGLG), and 182 to 202 (AIILAGAIPTAVMAVGADLLM).

Belongs to the binding-protein-dependent transport system permease family. CysTW subfamily.

The protein localises to the cell membrane. Its function is as follows. Involved in a high affinity multicomponent binding-protein-dependent transport system for choline; probably responsible for the translocation of the substrate across the membrane. The protein is Choline transport system permease protein OpuBD (opuBD) of Bacillus subtilis (strain 168).